Consider the following 186-residue polypeptide: MGLTETLSKPGEMFGDMFQVATLDNVVQWGQSFSLWPYPFATACCGIEYMSTACADYDIARFGAERPSFSPRQADMILVLGTITYKMAPVLRQIYDQLAEPKFVISVGACASSGGMFHTYGVLQGVDRILPVDVYVPGCPPRPEAILDALVKLQKKVQSQGLEARRQEVMRKIEEINERNKPLVVA.

[4Fe-4S] cluster is bound by residues cysteine 44, cysteine 45, cysteine 110, and cysteine 139.

The protein belongs to the complex I 20 kDa subunit family. As to quaternary structure, NDH-1 is composed of 14 different subunits. Subunits NuoB, C, D, E, F, and G constitute the peripheral sector of the complex. Requires [4Fe-4S] cluster as cofactor.

The protein resides in the cell inner membrane. It carries out the reaction a quinone + NADH + 5 H(+)(in) = a quinol + NAD(+) + 4 H(+)(out). Functionally, NDH-1 shuttles electrons from NADH, via FMN and iron-sulfur (Fe-S) centers, to quinones in the respiratory chain. The immediate electron acceptor for the enzyme in this species is believed to be ubiquinone. Couples the redox reaction to proton translocation (for every two electrons transferred, four hydrogen ions are translocated across the cytoplasmic membrane), and thus conserves the redox energy in a proton gradient. The sequence is that of NADH-quinone oxidoreductase subunit B from Leptospira biflexa serovar Patoc (strain Patoc 1 / Ames).